Here is a 535-residue protein sequence, read N- to C-terminus: Thermosome subunit gamma (535 aa).

The protein belongs to the TCP-1 chaperonin family. As to quaternary structure, forms a Heterooligomeric complex of two stacked eight-membered rings.

Molecular chaperone; binds unfolded polypeptides in vitro, and has a weak ATPase activity. The protein is Thermosome subunit gamma (thsC) of Saccharolobus solfataricus (strain ATCC 35092 / DSM 1617 / JCM 11322 / P2) (Sulfolobus solfataricus).